Here is a 692-residue protein sequence, read N- to C-terminus: DNA ligase (692 aa).

NAD(+) is bound by residues 35–39 (DLVYD), 88–89 (SL), and Glu-117. The active-site N6-AMP-lysine intermediate is the Lys-119. Residues Arg-140, Glu-176, Lys-301, and Lys-325 each coordinate NAD(+). Zn(2+) contacts are provided by Cys-416, Cys-419, Cys-434, and Cys-439. A BRCT domain is found at 611–692 (LTNQSNSWAS…FDLIKNSKKT (82 aa)).

It belongs to the NAD-dependent DNA ligase family. LigA subfamily. Mg(2+) is required as a cofactor. The cofactor is Mn(2+).

The catalysed reaction is NAD(+) + (deoxyribonucleotide)n-3'-hydroxyl + 5'-phospho-(deoxyribonucleotide)m = (deoxyribonucleotide)n+m + AMP + beta-nicotinamide D-nucleotide.. Its function is as follows. DNA ligase that catalyzes the formation of phosphodiester linkages between 5'-phosphoryl and 3'-hydroxyl groups in double-stranded DNA using NAD as a coenzyme and as the energy source for the reaction. It is essential for DNA replication and repair of damaged DNA. The polypeptide is DNA ligase (Mesomycoplasma hyopneumoniae (strain 232) (Mycoplasma hyopneumoniae)).